Consider the following 342-residue polypeptide: Dihydroorotase (342 aa).

Residues histidine 13 and histidine 15 each contribute to the Zn(2+) site. Substrate contacts are provided by residues 15–17 (HLR) and asparagine 41. Zn(2+) is bound by residues lysine 98, histidine 135, and histidine 173. Lysine 98 carries the N6-carboxylysine modification. Histidine 135 contacts substrate. Leucine 218 is a binding site for substrate. Aspartate 246 serves as a coordination point for Zn(2+). Residue aspartate 246 is part of the active site. Substrate contacts are provided by histidine 250 and alanine 262.

It belongs to the metallo-dependent hydrolases superfamily. DHOase family. Class II DHOase subfamily. Homodimer. Requires Zn(2+) as cofactor.

It carries out the reaction (S)-dihydroorotate + H2O = N-carbamoyl-L-aspartate + H(+). Its pathway is pyrimidine metabolism; UMP biosynthesis via de novo pathway; (S)-dihydroorotate from bicarbonate: step 3/3. Catalyzes the reversible cyclization of carbamoyl aspartate to dihydroorotate. The chain is Dihydroorotase from Aliivibrio salmonicida (strain LFI1238) (Vibrio salmonicida (strain LFI1238)).